Here is an 880-residue protein sequence, read N- to C-terminus: Chaperone protein ClpB 1 (880 aa).

One can recognise a Clp R domain in the interval 6-148 (PNKFTDKAWE…EASIKAVRGS (143 aa)). Repeat regions lie at residues 9–74 (FTDK…TQRQ) and 85–148 (LGRS…VRGS). The segment at 161–343 (EALQKFGRDL…RRFQQVYVDQ (183 aa)) is NBD1. 208–215 (GEPGVGKT) serves as a coordination point for ATP. Residues 344–554 (PSVENTISIL…IAEIVAKWTG (211 aa)) form a linker region. The stretch at 394–530 (IDLVDEAAAQ…KEAKLLELQS (137 aa)) forms a coiled coil. The NBD2 stretch occupies residues 564–775 (ERQKLLQLES…RVDDTILFHA (212 aa)). 614-621 (GPTGVGKT) contacts ATP. The segment at 776 to 880 (LSRSEMSHII…VKVSVTQITT (105 aa)) is C-terminal.

Belongs to the ClpA/ClpB family. As to quaternary structure, homohexamer. The oligomerization is ATP-dependent.

Its subcellular location is the cytoplasm. Functionally, part of a stress-induced multi-chaperone system, it is involved in the recovery of the cell from heat-induced damage, in cooperation with DnaK, DnaJ and GrpE. Acts before DnaK, in the processing of protein aggregates. Protein binding stimulates the ATPase activity; ATP hydrolysis unfolds the denatured protein aggregates, which probably helps expose new hydrophobic binding sites on the surface of ClpB-bound aggregates, contributing to the solubilization and refolding of denatured protein aggregates by DnaK. In Nostoc sp. (strain PCC 7120 / SAG 25.82 / UTEX 2576), this protein is Chaperone protein ClpB 1 (clpB1).